Consider the following 440-residue polypeptide: APO protein 2, chloroplastic (440 aa).

The N-terminal 62 residues, 1 to 62 (MSITYSAISF…SLQLNSRVVL (62 aa)), are a transit peptide targeting the chloroplast. The span at 106 to 115 (ARERVKNNKD) shows a compositional bias: basic and acidic residues. Residues 106-126 (ARERVKNNKDKPKRPLPPPKN) are disordered. APO domains are found at residues 162-247 (ACGW…EIPE) and 332-417 (VCGY…VVPE).

This sequence belongs to the APO family.

It is found in the plastid. The protein localises to the chloroplast. May be involved in the stable assembly of several 4Fe-4S cluster-containing complexes of chloroplasts. In Arabidopsis thaliana (Mouse-ear cress), this protein is APO protein 2, chloroplastic (APO2).